The chain runs to 387 residues: Sialic acid-binding Ig-like lectin 13 (387 aa).

The first 15 residues, 1 to 15, serve as a signal peptide directing secretion; that stretch reads MLPLLLPLLWAGALA. The Ig-like V-type domain occupies 16 to 138; it reads LEGIFQLEVP…KDPPLSVHVT (123 aa). The Extracellular portion of the chain corresponds to 16-341; sequence LEGIFQLEVP…QRKSGPMAEV (326 aa). 3 disulfide bridges follow: C35–C168, C40–C100, and C162–C211. N99 is a glycosylation site (N-linked (GlcNAc...) asparagine). R118 contacts N-acetylneuraminate. The 84-residue stretch at 144 to 227 folds into the Ig-like C2-type 1 domain; sequence PDILIPGALK…AGVTTTRTVR (84 aa). N-linked (GlcNAc...) asparagine glycosylation is found at N229, N236, and N254. The region spanning 234–326 is the Ig-like C2-type 2 domain; sequence PQNLTLTVFQ…RNPLGSQQVS (93 aa). C270 and C314 are disulfide-bonded. Residues 342-362 form a helical membrane-spanning segment; the sequence is VLVAIGEAAVKILLLFLCLII. At 363-387 the chain is on the cytoplasmic side; it reads LRVKSHRRKAAKAATGVEAAKVVKG.

It belongs to the immunoglobulin superfamily. SIGLEC (sialic acid binding Ig-like lectin) family.

The protein localises to the membrane. Its function is as follows. Putative adhesion molecule that mediates sialic-acid dependent binding to cells. The sequence is that of Sialic acid-binding Ig-like lectin 13 (SIGLEC13) from Pan troglodytes (Chimpanzee).